Consider the following 240-residue polypeptide: Enolase-phosphatase E1 (240 aa).

This sequence belongs to the HAD-like hydrolase superfamily. MasA/MtnC family. As to quaternary structure, monomer. It depends on Mg(2+) as a cofactor.

The enzyme catalyses 5-methylsulfanyl-2,3-dioxopentyl phosphate + H2O = 1,2-dihydroxy-5-(methylsulfanyl)pent-1-en-3-one + phosphate. Its pathway is amino-acid biosynthesis; L-methionine biosynthesis via salvage pathway; L-methionine from S-methyl-5-thio-alpha-D-ribose 1-phosphate: step 3/6. It participates in amino-acid biosynthesis; L-methionine biosynthesis via salvage pathway; L-methionine from S-methyl-5-thio-alpha-D-ribose 1-phosphate: step 4/6. Functionally, bifunctional enzyme that catalyzes the enolization of 2,3-diketo-5-methylthiopentyl-1-phosphate (DK-MTP-1-P) into the intermediate 2-hydroxy-3-keto-5-methylthiopentenyl-1-phosphate (HK-MTPenyl-1-P), which is then dephosphorylated to form the acireductone 1,2-dihydroxy-3-keto-5-methylthiopentene (DHK-MTPene). This Saccharopolyspora erythraea (strain ATCC 11635 / DSM 40517 / JCM 4748 / NBRC 13426 / NCIMB 8594 / NRRL 2338) protein is Enolase-phosphatase E1.